The chain runs to 283 residues: Thymidylate synthase (283 aa).

R22 is a binding site for dUMP. Residue C160 is the Nucleophile of the active site. Residues 180 to 183 (RSAD), N191, and 221 to 223 (HIY) each bind dUMP. D183 lines the (6R)-5,10-methylene-5,6,7,8-tetrahydrofolate pocket. Residue S282 coordinates (6R)-5,10-methylene-5,6,7,8-tetrahydrofolate.

It belongs to the thymidylate synthase family. Bacterial-type ThyA subfamily. Homodimer.

It localises to the cytoplasm. It carries out the reaction dUMP + (6R)-5,10-methylene-5,6,7,8-tetrahydrofolate = 7,8-dihydrofolate + dTMP. It functions in the pathway pyrimidine metabolism; dTTP biosynthesis. In terms of biological role, catalyzes the reductive methylation of 2'-deoxyuridine-5'-monophosphate (dUMP) to 2'-deoxythymidine-5'-monophosphate (dTMP) while utilizing 5,10-methylenetetrahydrofolate (mTHF) as the methyl donor and reductant in the reaction, yielding dihydrofolate (DHF) as a by-product. This enzymatic reaction provides an intracellular de novo source of dTMP, an essential precursor for DNA biosynthesis. The sequence is that of Thymidylate synthase from Glaesserella parasuis serovar 5 (strain SH0165) (Haemophilus parasuis).